Reading from the N-terminus, the 470-residue chain is Cysteine--tRNA ligase (470 aa).

Residue C28 participates in Zn(2+) binding. The short motif at 30-40 (PTVYNYIHIGN) is the 'HIGH' region element. The Zn(2+) site is built by C212, H237, and E241. A 'KMSKS' region motif is present at residues 271-275 (KMSKS). ATP is bound at residue K274.

The protein belongs to the class-I aminoacyl-tRNA synthetase family. Monomer. Zn(2+) serves as cofactor.

Its subcellular location is the cytoplasm. It carries out the reaction tRNA(Cys) + L-cysteine + ATP = L-cysteinyl-tRNA(Cys) + AMP + diphosphate. In Levilactobacillus brevis (strain ATCC 367 / BCRC 12310 / CIP 105137 / JCM 1170 / LMG 11437 / NCIMB 947 / NCTC 947) (Lactobacillus brevis), this protein is Cysteine--tRNA ligase.